A 218-amino-acid chain; its full sequence is 3,4-dihydroxy-2-butanone 4-phosphate synthase (218 aa).

D-ribulose 5-phosphate-binding positions include 38-39 (RE), D43, 151-155 (RRGHT), and E175. E39 is a binding site for Mg(2+). H154 contacts Mg(2+).

This sequence belongs to the DHBP synthase family. Homodimer. Mg(2+) serves as cofactor. It depends on Mn(2+) as a cofactor.

It carries out the reaction D-ribulose 5-phosphate = (2S)-2-hydroxy-3-oxobutyl phosphate + formate + H(+). It participates in cofactor biosynthesis; riboflavin biosynthesis; 2-hydroxy-3-oxobutyl phosphate from D-ribulose 5-phosphate: step 1/1. Functionally, catalyzes the conversion of D-ribulose 5-phosphate to formate and 3,4-dihydroxy-2-butanone 4-phosphate. The chain is 3,4-dihydroxy-2-butanone 4-phosphate synthase from Vibrio cholerae serotype O1 (strain M66-2).